An 86-amino-acid polypeptide reads, in one-letter code: Small ribosomal subunit protein uS17 (86 aa).

Belongs to the universal ribosomal protein uS17 family. Part of the 30S ribosomal subunit.

In terms of biological role, one of the primary rRNA binding proteins, it binds specifically to the 5'-end of 16S ribosomal RNA. This Methylococcus capsulatus (strain ATCC 33009 / NCIMB 11132 / Bath) protein is Small ribosomal subunit protein uS17.